The following is a 272-amino-acid chain: Aquaporin-11 (272 aa).

At 1–14 (MTALRALWSEMQDT) the chain is on the cytoplasmic side. A helical transmembrane segment spans residues 15–35 (CTSLGLMLSVVLLAGLARVVA). At 36–47 (RQQQLHRPMAHA) the chain is on the lumenal side. The chain crosses the membrane as a helical span at residues 48–68 (FVLEFLATLQLCCCTHELLLL). The Cytoplasmic portion of the chain corresponds to 69 to 75 (SEQEPAH). The helical transmembrane segment at 76–96 (PTWPLTLIYFFTLVHGLTLVG) threads the bilayer. Over 97 to 167 (TSSNPCGVMM…NPIQVDLPKA (71 aa)) the chain is Lumenal. The NPC motif lies at 100–102 (NPC). The helical transmembrane segment at 168–188 (VIVEALCSFIFHSALLNFQEV) threads the bilayer. The Cytoplasmic segment spans residues 189-195 (RPKLRIH). A helical membrane pass occupies residues 196–216 (LLAALITFLVYAGGSLTGAVF). Residues 217-219 (NPA) carry the NPA motif. Residues 217–235 (NPALALSLHFKCFDEAFLQ) lie on the Lumenal side of the membrane. Residues 236–256 (FFIVYWLAPSLGILLMILMFS) form a helical membrane-spanning segment. At 257–272 (FFLPWLYNNHTINKKE) the chain is on the cytoplasmic side.

The protein belongs to the MIP/aquaporin (TC 1.A.8) family. AQP11/AQP12 subfamily. As to quaternary structure, homodimer; disulfide-linked. Homotetramer. Can also form homomultimer. Not glycosylated. In terms of tissue distribution, expressed in retina specifically at retinal Mueller glial cells.

It localises to the endoplasmic reticulum membrane. The protein resides in the cytoplasmic vesicle membrane. It is found in the cell membrane. It carries out the reaction H2O(in) = H2O(out). The catalysed reaction is glycerol(in) = glycerol(out). It catalyses the reaction H2O2(out) = H2O2(in). Functionally, channel protein that facilitates the transport of water, glycerol and hydrogen peroxide across membrane of cell or organelles guaranteeing intracellular homeostasis in several organes like liver, kidney and brain. In situation of stress, participates in endoplasmic reticulum (ER) homeostasis by regulating redox homeostasis through the transport of hydrogen peroxide across the endoplasmic reticulum membrane thereby regulating the oxidative stress through the NADPH oxidase 2 pathway. Plays a role by maintaining an environment suitable for translation or protein foldings in the ER lumen namely by participating in the PKD1 glycosylation processing resulting in regulation of PKD1 membrane trafficking thereby preventing the accumulation of unfolding protein in ER. Plays a role in the proximal tubule function by regulating its endosomal acidification. May play a role in postnatal kidney development. In Equus caballus (Horse), this protein is Aquaporin-11.